Reading from the N-terminus, the 108-residue chain is Large ribosomal subunit protein uL23 (108 aa).

Belongs to the universal ribosomal protein uL23 family. As to quaternary structure, part of the 50S ribosomal subunit. Contacts protein L29, and trigger factor when it is bound to the ribosome.

One of the early assembly proteins it binds 23S rRNA. One of the proteins that surrounds the polypeptide exit tunnel on the outside of the ribosome. Forms the main docking site for trigger factor binding to the ribosome. The polypeptide is Large ribosomal subunit protein uL23 (Leptothrix cholodnii (strain ATCC 51168 / LMG 8142 / SP-6) (Leptothrix discophora (strain SP-6))).